Here is a 940-residue protein sequence, read N- to C-terminus: UvrABC system protein A (940 aa).

31–38 (GLSGSGKS) serves as a coordination point for ATP. The C4-type zinc finger occupies 253–280 (CPICGYSMRELEPRLFSFNNPAGACPTC). 2 consecutive ABC transporter domains span residues 310 to 587 (WDRR…PESL) and 607 to 937 (ANPE…RFLK). Position 640–647 (640–647 (GVSGSGKS)) interacts with ATP. The C4-type zinc finger occupies 740-766 (CEACQGDGVIKVEMHFLPDIYVPCDQC).

It belongs to the ABC transporter superfamily. UvrA family. As to quaternary structure, forms a heterotetramer with UvrB during the search for lesions. Interacts with TRCF (Mfd). UvrB and TRCF binding to UvrA could be mutually exclusive.

The protein localises to the cytoplasm. In terms of biological role, the UvrABC repair system catalyzes the recognition and processing of DNA lesions. UvrA is an ATPase and a DNA-binding protein. A damage recognition complex composed of 2 UvrA and 2 UvrB subunits scans DNA for abnormalities. When the presence of a lesion has been verified by UvrB, the UvrA molecules dissociate. This Escherichia coli (strain K12) protein is UvrABC system protein A.